Consider the following 369-residue polypeptide: Putative protein FAM10A5 (369 aa).

Positions 38 to 98 (MGGKVPPATQ…IEPDTDAPQE (61 aa)) are disordered. A compositionally biased stretch (basic and acidic residues) spans 49 to 73 (AKSEENTKEEKPDSKKVEEDLKADE). The span at 89-98 (IEPDTDAPQE) shows a compositional bias: acidic residues. 3 TPR repeats span residues 114-147 (ANDK…NPRL), 149-181 (ILYA…NPDS), and 183-215 (QPYK…DYDE). Residues 256 to 272 (KAQEEQERAQREEEARR) are compositionally biased toward basic and acidic residues. The segment at 256-300 (KAQEEQERAQREEEARRQSGAHYGPFPGGFPGGMPGNFPGGMPGM) is disordered. The segment covering 281–300 (FPGGFPGGMPGNFPGGMPGM) has biased composition (gly residues). An STI1 domain is found at 319–358 (DPEALAAMQDPEVMVAFQDVAQNPANMSKYQSNPKVMNLI). Serine 346 bears the Phosphoserine mark. N6-acetyllysine occurs at positions 353 and 360.

It belongs to the FAM10 family.

It is found in the cytoplasm. This Homo sapiens (Human) protein is Putative protein FAM10A5 (ST13P5).